Reading from the N-terminus, the 267-residue chain is LexA repressor (267 aa).

Positions 1–44 (MSIDESSDNPTPRPKLGRPPKSEADKRAEKEAQKDGKKPALSTR) are disordered. Basic and acidic residues predominate over residues 20-38 (PKSEADKRAEKEAQKDGKK). A DNA-binding region (H-T-H motif) is located at residues 65–85 (IREIADAVGLHSTSSVSYHLT). The disordered stretch occupies residues 111-140 (GQLTNESTKKNAGSPQPTSAAIPEPTTEGE). Residues 112–129 (QLTNESTKKNAGSPQPTS) are compositionally biased toward polar residues. Catalysis depends on for autocatalytic cleavage activity residues S191 and K228.

The protein belongs to the peptidase S24 family. As to quaternary structure, homodimer.

It catalyses the reaction Hydrolysis of Ala-|-Gly bond in repressor LexA.. Its function is as follows. Represses a number of genes involved in the response to DNA damage (SOS response), including recA and lexA. In the presence of single-stranded DNA, RecA interacts with LexA causing an autocatalytic cleavage which disrupts the DNA-binding part of LexA, leading to derepression of the SOS regulon and eventually DNA repair. The protein is LexA repressor of Corynebacterium jeikeium (strain K411).